The primary structure comprises 296 residues: Diheme cytochrome c-type (296 aa).

The heme c site is built by cysteine 52, cysteine 55, histidine 56, cysteine 202, cysteine 205, and histidine 206.

In terms of processing, binds 2 heme c groups covalently per subunit.

It localises to the cell membrane. In terms of biological role, particularly expressed when cells generate energy via aerobic respiration. This is Diheme cytochrome c-type (cycG) from Cereibacter sphaeroides (strain ATCC 17023 / DSM 158 / JCM 6121 / CCUG 31486 / LMG 2827 / NBRC 12203 / NCIMB 8253 / ATH 2.4.1.) (Rhodobacter sphaeroides).